A 349-amino-acid chain; its full sequence is MTDLRIAVLGVGVMGADHVARITSRISGARVAVVNDHLVEKAEQLAASIPGCSAVADPLDAIADADVDAVVLATPGGTHEEQLLACLDQRKPVMCEKPLTTDVSTSLEIARREADLGRPLIQVGFMRRFDDEYVRLKALLDGGELGNPLMMHCVHRNPGVPAYFDSSLIVKDSLVHEVDITRYLFGEEIASVQIIKPTSNPGAPNGVVDPQIAILRTVSGRHVDVELFVTTGVAYEVRTEVVGEHGSAIIGLDVGLIRKKGPGSWGGTLTPGFRERFGPAYDTEIQRWVDAVHSGTNVCGPTAWDGYAAAAVCAAGVESLETGLPVDVQLADEVTSPSPQGVRESDGCR.

The protein belongs to the Gfo/Idh/MocA family. In terms of assembly, homotetramer.

It catalyses the reaction myo-inositol + NAD(+) = scyllo-inosose + NADH + H(+). Its function is as follows. Involved in the oxidation of myo-inositol (MI) to 2-keto-myo-inositol (2KMI or 2-inosose). The chain is Inositol 2-dehydrogenase from Mycolicibacterium gilvum (strain PYR-GCK) (Mycobacterium gilvum (strain PYR-GCK)).